A 514-amino-acid polypeptide reads, in one-letter code: MEISWGRAMWRNFLGQSPDWYKLALLVFLIINPFIFLANPFIAGWLLVAEFIFTLAMALKCYPLLPGGLLAIEAVIIGMTSAAHVREEVAANLEVLLLLMFMVAGIYFMKQLLLFIFTRLLLSIRSKMVLSLAFCVAAAFLSAFLDALTVVAVVISVAVGFYGIYHRVASSRGEENDMLDDSHIDPHYKTVLEQFRGFLRSLMMHAGVGTALGGVMTMVGEPQNLIIAKAAGWHFGDFFLRMSPVTVPVLVCGLLTCMLVEKMRWFGYGETLPEKVRDVLQQFDDQSRKKRTRQDKIKLIVQAVIGVWLVTALALHLAEVGLIGLSVIILATALTGVTDEHAIGKAFTESLPFTALLTVFFSIVAVIIDQHLFAPIIQFVLQASEHAQLTLFYLFNGLLSSISDNVFVGTIYINEAKAAMENGAISLKQFELLAVAINTGTNLPSVATPNGQAAFLFLLTSALAPLIRLSYGRMVWMALPYTIVLTLIGLLCVEFTLAPATEWMTQAGWLATLS.

The next 12 helical transmembrane spans lie at 23-43 (LALL…PFIA), 63-83 (PLLP…TSAA), 97-117 (LLLM…LFIF), 120-140 (LLLS…AAAF), 144-164 (FLDA…FYGI), 202-222 (LMMH…VGEP), 238-258 (FFLR…LTCM), 303-323 (AVIG…VGLI), 357-377 (LTVF…APII), 391-411 (LFYL…VGTI), 447-467 (ATPN…APLI), and 475-495 (VWMA…CVEF).

It belongs to the NhaB Na(+)/H(+) (TC 2.A.34) antiporter family.

It localises to the cell inner membrane. It carries out the reaction 2 Na(+)(in) + 3 H(+)(out) = 2 Na(+)(out) + 3 H(+)(in). Its function is as follows. Na(+)/H(+) antiporter that extrudes sodium in exchange for external protons. In Salmonella newport (strain SL254), this protein is Na(+)/H(+) antiporter NhaB.